The following is a 419-amino-acid chain: L-rhamnose isomerase (419 aa).

The Mn(2+) site is built by His262, Asp294, and Asp296.

This sequence belongs to the rhamnose isomerase family. In terms of assembly, homotetramer. Mn(2+) serves as cofactor.

Its subcellular location is the cytoplasm. It catalyses the reaction L-rhamnopyranose = L-rhamnulose. Its pathway is carbohydrate degradation; L-rhamnose degradation; glycerone phosphate from L-rhamnose: step 1/3. In terms of biological role, catalyzes the interconversion of L-rhamnose and L-rhamnulose. The protein is L-rhamnose isomerase of Shigella sonnei (strain Ss046).